The following is a 196-amino-acid chain: ATP-dependent Clp protease proteolytic subunit (196 aa).

S98 serves as the catalytic Nucleophile. H123 is an active-site residue.

The protein belongs to the peptidase S14 family. In terms of assembly, fourteen ClpP subunits assemble into 2 heptameric rings which stack back to back to give a disk-like structure with a central cavity, resembling the structure of eukaryotic proteasomes.

Its subcellular location is the cytoplasm. It carries out the reaction Hydrolysis of proteins to small peptides in the presence of ATP and magnesium. alpha-casein is the usual test substrate. In the absence of ATP, only oligopeptides shorter than five residues are hydrolyzed (such as succinyl-Leu-Tyr-|-NHMec, and Leu-Tyr-Leu-|-Tyr-Trp, in which cleavage of the -Tyr-|-Leu- and -Tyr-|-Trp bonds also occurs).. Cleaves peptides in various proteins in a process that requires ATP hydrolysis. Has a chymotrypsin-like activity. Plays a major role in the degradation of misfolded proteins. The polypeptide is ATP-dependent Clp protease proteolytic subunit (Actinobacillus pleuropneumoniae serotype 5b (strain L20)).